A 739-amino-acid chain; its full sequence is Phosphoribosylformylglycinamidine synthase subunit PurL (739 aa).

Residue histidine 54 is part of the active site. The ATP site is built by tyrosine 57 and lysine 96. Glutamate 98 serves as a coordination point for Mg(2+). Substrate-binding positions include 99–102 and arginine 121; that span reads SHNH. Histidine 100 (proton acceptor) is an active-site residue. Aspartate 122 contacts Mg(2+). A substrate-binding site is contributed by glutamine 245. Residue aspartate 273 participates in Mg(2+) binding. Position 317-319 (317-319) interacts with substrate; that stretch reads ESQ. ATP-binding residues include aspartate 500 and glycine 537. Residue asparagine 538 participates in Mg(2+) binding. Serine 540 contacts substrate.

It belongs to the FGAMS family. As to quaternary structure, monomer. Part of the FGAM synthase complex composed of 1 PurL, 1 PurQ and 2 PurS subunits.

It localises to the cytoplasm. The catalysed reaction is N(2)-formyl-N(1)-(5-phospho-beta-D-ribosyl)glycinamide + L-glutamine + ATP + H2O = 2-formamido-N(1)-(5-O-phospho-beta-D-ribosyl)acetamidine + L-glutamate + ADP + phosphate + H(+). Its pathway is purine metabolism; IMP biosynthesis via de novo pathway; 5-amino-1-(5-phospho-D-ribosyl)imidazole from N(2)-formyl-N(1)-(5-phospho-D-ribosyl)glycinamide: step 1/2. Functionally, part of the phosphoribosylformylglycinamidine synthase complex involved in the purines biosynthetic pathway. Catalyzes the ATP-dependent conversion of formylglycinamide ribonucleotide (FGAR) and glutamine to yield formylglycinamidine ribonucleotide (FGAM) and glutamate. The FGAM synthase complex is composed of three subunits. PurQ produces an ammonia molecule by converting glutamine to glutamate. PurL transfers the ammonia molecule to FGAR to form FGAM in an ATP-dependent manner. PurS interacts with PurQ and PurL and is thought to assist in the transfer of the ammonia molecule from PurQ to PurL. The polypeptide is Phosphoribosylformylglycinamidine synthase subunit PurL (Bacillus cereus (strain ATCC 14579 / DSM 31 / CCUG 7414 / JCM 2152 / NBRC 15305 / NCIMB 9373 / NCTC 2599 / NRRL B-3711)).